We begin with the raw amino-acid sequence, 419 residues long: Mitogen-activated protein kinase spm1 (419 aa).

A Protein kinase domain is found at 23–314 (YTVTKELGQG…VEEALEHPYL (292 aa)). ATP contacts are provided by residues 29 to 37 (LGQGAYGIV) and lysine 52. The active-site Proton acceptor is the aspartate 149.

Belongs to the protein kinase superfamily. Ser/Thr protein kinase family. MAP kinase subfamily. The cofactor is Mg(2+). Post-translationally, phosphorylated by the MAP kinase kinase mkk1.

The enzyme catalyses L-seryl-[protein] + ATP = O-phospho-L-seryl-[protein] + ADP + H(+). It carries out the reaction L-threonyl-[protein] + ATP = O-phospho-L-threonyl-[protein] + ADP + H(+). Mitogen-activated protein kinase, part of the mkh1-mkk1-spm1 MAPK cascade that regulates vegetative growth, conidial formation, colony surface hydrophobicity, osmotic stress, cell wall integrity maintenance, carbon and nitrogen source utilization, chitin distribution, septa formation, and pathogenicity. This is Mitogen-activated protein kinase spm1 from Cytospora mali (Apple Valsa canker fungus).